The following is a 1502-amino-acid chain: Clustered mitochondria protein homolog (1502 aa).

6 disordered regions span residues 1–62 (MSES…EPLD), 571–615 (AQAE…NPMM), 755–799 (AEAE…EEDR), 1054–1085 (KDQE…GETV), 1381–1403 (ARER…RLGG), and 1429–1502 (GQGG…GAKR). Positions 7-35 (AAAQNGQAEEQQLQQQLDEQQQLEEQQQL) are enriched in low complexity. Basic and acidic residues predominate over residues 53–62 (KPKDSTEPLD). One can recognise a Clu domain in the interval 399–693 (EILRTQLAFL…RLAPVDVEWL (295 aa)). The segment covering 575 to 586 (TEAEAETADAVE) has biased composition (acidic residues). Positions 587-606 (GEQKKEDWVDVEKPTEKSGS) are enriched in basic and acidic residues. Positions 781–792 (EEQSAAASAAAA) are enriched in low complexity. Over residues 1054–1069 (KDQEEEENKREENIKS) the composition is skewed to basic and acidic residues. Residues 1429–1451 (GQGGNPSANAAAATAGQGEQANG) are compositionally biased toward low complexity. Over residues 1462–1471 (RGTESLEELV) the composition is skewed to basic and acidic residues. A compositionally biased stretch (basic residues) spans 1486-1502 (KRGKNALRGKRRTGAKR).

It belongs to the CLU family. May associate with the eukaryotic translation initiation factor 3 (eIF-3) complex.

The protein localises to the cytoplasm. In terms of biological role, mRNA-binding protein involved in proper cytoplasmic distribution of mitochondria. This Cryptococcus neoformans var. neoformans serotype D (strain B-3501A) (Filobasidiella neoformans) protein is Clustered mitochondria protein homolog.